Consider the following 512-residue polypeptide: Activin receptor type-2B (512 aa).

Residues 1 to 18 (MTAPWVALALLWGSLCAG) form the signal peptide. Topologically, residues 19–137 (SGRGEAETRE…PPPTAPTLLT (119 aa)) are extracellular. Cystine bridges form between cysteine 29–cysteine 59, cysteine 49–cysteine 77, cysteine 84–cysteine 103, cysteine 90–cysteine 102, and cysteine 104–cysteine 109. N-linked (GlcNAc...) asparagine glycosylation is found at asparagine 42 and asparagine 65. The helical transmembrane segment at 138–158 (VLAYSLLPIGGLSLIVLLAFW) threads the bilayer. Residues 159–512 (MYRHRKPPYG…VDLPPKESSI (354 aa)) lie on the Cytoplasmic side of the membrane. The 291-residue stretch at 190–480 (LQLLEIKARG…AGCVEERVSL (291 aa)) folds into the Protein kinase domain. ATP-binding positions include 196–204 (KARGRFGCV) and lysine 217. The Proton acceptor role is filled by aspartate 321. The segment at 491–512 (DCLVSLVTSVTNVDLPPKESSI) is interaction with DYNLT1.

It belongs to the protein kinase superfamily. TKL Ser/Thr protein kinase family. TGFB receptor subfamily. In terms of assembly, forms an activin receptor complex with activin type II receptors such as ACVR1B. Interacts with VPS39. Interacts with DYNLT1. Interacts with BMP3. Interacts with BMP2. Interacts with BMP6. Requires Mg(2+) as cofactor. The cofactor is Mn(2+). Phosphorylated. Constitutive phosphorylation is in part catalyzed by its own kinase activity.

The protein resides in the cell membrane. The catalysed reaction is L-threonyl-[receptor-protein] + ATP = O-phospho-L-threonyl-[receptor-protein] + ADP + H(+). It carries out the reaction L-seryl-[receptor-protein] + ATP = O-phospho-L-seryl-[receptor-protein] + ADP + H(+). Its function is as follows. Transmembrane serine/threonine kinase activin type-2 receptor forming an activin receptor complex with activin type-1 serine/threonine kinase receptors (ACVR1, ACVR1B or ACVR1c). Transduces the activin signal from the cell surface to the cytoplasm and is thus regulating many physiological and pathological processes including neuronal differentiation and neuronal survival, hair follicle development and cycling, FSH production by the pituitary gland, wound healing, extracellular matrix production, immunosuppression and carcinogenesis. Activin is also thought to have a paracrine or autocrine role in follicular development in the ovary. Within the receptor complex, the type-2 receptors act as a primary activin receptors (binds activin-A/INHBA, activin-B/INHBB as well as inhibin-A/INHA-INHBA). The type-1 receptors like ACVR1B act as downstream transducers of activin signals. Activin binds to type-2 receptor at the plasma membrane and activates its serine-threonine kinase. The activated receptor type-2 then phosphorylates and activates the type-1 receptor. Once activated, the type-1 receptor binds and phosphorylates the SMAD proteins SMAD2 and SMAD3, on serine residues of the C-terminal tail. Soon after their association with the activin receptor and subsequent phosphorylation, SMAD2 and SMAD3 are released into the cytoplasm where they interact with the common partner SMAD4. This SMAD complex translocates into the nucleus where it mediates activin-induced transcription. Inhibitory SMAD7, which is recruited to ACVR1B through FKBP1A, can prevent the association of SMAD2 and SMAD3 with the activin receptor complex, thereby blocking the activin signal. Activin signal transduction is also antagonized by the binding to the receptor of inhibin-B via the IGSF1 inhibin coreceptor. This is Activin receptor type-2B (ACVR2B) from Homo sapiens (Human).